Here is a 403-residue protein sequence, read N- to C-terminus: CCA-adding enzyme (403 aa).

ATP contacts are provided by Gly32 and Arg35. Gly32 and Arg35 together coordinate CTP. Positions 45 and 47 each coordinate Mg(2+). Residues Arg116, Asp159, Arg162, Arg165, and Arg168 each coordinate ATP. The CTP site is built by Arg116, Asp159, Arg162, Arg165, and Arg168.

This sequence belongs to the tRNA nucleotidyltransferase/poly(A) polymerase family. Bacterial CCA-adding enzyme type 3 subfamily. As to quaternary structure, homodimer. Mg(2+) serves as cofactor.

The enzyme catalyses a tRNA precursor + 2 CTP + ATP = a tRNA with a 3' CCA end + 3 diphosphate. The catalysed reaction is a tRNA with a 3' CCA end + 2 CTP + ATP = a tRNA with a 3' CCACCA end + 3 diphosphate. Functionally, catalyzes the addition and repair of the essential 3'-terminal CCA sequence in tRNAs without using a nucleic acid template. Adds these three nucleotides in the order of C, C, and A to the tRNA nucleotide-73, using CTP and ATP as substrates and producing inorganic pyrophosphate. tRNA 3'-terminal CCA addition is required both for tRNA processing and repair. Also involved in tRNA surveillance by mediating tandem CCA addition to generate a CCACCA at the 3' terminus of unstable tRNAs. While stable tRNAs receive only 3'-terminal CCA, unstable tRNAs are marked with CCACCA and rapidly degraded. The polypeptide is CCA-adding enzyme (Streptococcus uberis (strain ATCC BAA-854 / 0140J)).